The following is a 438-amino-acid chain: AP-2 complex subunit mu (438 aa).

Residues 177-437 enclose the MHD domain; the sequence is KNEVFLDIVE…ITKAGSYEIR (261 aa).

This sequence belongs to the adaptor complexes medium subunit family. Adaptor protein complex 2 (AP-2) is a heterotetramer composed of two large adaptins (alpha-type and beta-type subunits), a medium adaptin (mu-type subunit) and a small adaptin (sigma-type subunit).

It is found in the cell membrane. The protein localises to the membrane. It localises to the coated pit. The protein resides in the golgi apparatus. Its subcellular location is the trans-Golgi network membrane. Subunit of the adaptor protein complex 2 (AP-2). Adaptor protein complexes function in protein transport via transport vesicles in different membrane traffic pathways. Adaptor protein complexes are vesicle coat components and appear to be involved in cargo selection and vesicle formation. AP-2 is involved in clathrin-dependent endocytosis in which cargo proteins are incorporated into vesicles surrounded by clathrin (clathrin-coated vesicles, CCVs) which are destined for fusion with the early endosome. AP-2 recognizes Y-X-X-Phi endocytosis signal motif within the cytosolic tails of transmembrane cargo molecules. The complex binds polyphosphoinositides. The polypeptide is AP-2 complex subunit mu (AP2M) (Arabidopsis thaliana (Mouse-ear cress)).